Here is a 98-residue protein sequence, read N- to C-terminus: NADH-ubiquinone oxidoreductase chain 4L (98 aa).

3 helical membrane passes run 1–21, 29–49, and 61–81; these read MSMV…GLLV, SLLC…MAIL, and IILL…LVMV.

Belongs to the complex I subunit 4L family. In terms of assembly, core subunit of respiratory chain NADH dehydrogenase (Complex I) which is composed of 45 different subunits.

It localises to the mitochondrion inner membrane. The enzyme catalyses a ubiquinone + NADH + 5 H(+)(in) = a ubiquinol + NAD(+) + 4 H(+)(out). In terms of biological role, core subunit of the mitochondrial membrane respiratory chain NADH dehydrogenase (Complex I) which catalyzes electron transfer from NADH through the respiratory chain, using ubiquinone as an electron acceptor. Part of the enzyme membrane arm which is embedded in the lipid bilayer and involved in proton translocation. In Lynx canadensis (Canada lynx), this protein is NADH-ubiquinone oxidoreductase chain 4L (MT-ND4L).